A 276-amino-acid chain; its full sequence is TCP pilus virulence regulatory protein (276 aa).

Residues Glu172–Met269 form the HTH araC/xylS-type domain. 2 consecutive DNA-binding regions (H-T-H motif) follow at residues Ala189–Gly210 and Ile236–Met259.

It is found in the cytoplasm. Functionally, probable regulatory protein for the tcp operon. The polypeptide is TCP pilus virulence regulatory protein (tcpN) (Vibrio cholerae serotype O1 (strain ATCC 39541 / Classical Ogawa 395 / O395)).